A 92-amino-acid chain; its full sequence is Large ribosomal subunit protein eL43 (92 aa).

Positions 39, 42, 57, and 60 each coordinate Zn(2+). Residues 39–60 (CSFCGKTKMKRRAVGIWHCGSC) form a C4-type zinc finger.

This sequence belongs to the eukaryotic ribosomal protein eL43 family. As to quaternary structure, component of the large ribosomal subunit.

The protein localises to the cytoplasm. Component of the large ribosomal subunit. The ribosome is a large ribonucleoprotein complex responsible for the synthesis of proteins in the cell. The chain is Large ribosomal subunit protein eL43 (rpl37a) from Ictalurus punctatus (Channel catfish).